A 503-amino-acid polypeptide reads, in one-letter code: MLDLTYEAPKPKVIAGAKHDWELVIGMEIHAQVSSNAKLFSGASTTFGAEPNSNVSFVDCAMPGMLPVINEFCVAQAVRTGLGLKAQINLVSAFDRKNYFYPDLPQGYQISQLYHPIVGEGEVLVELAPGIARLVRIERIHLEQDAGKSIHDMDPNLSFVDFNRTGVALMEIVSRPDIRGPEEAAAYVAKLRQILRYLGTCDGNMQNGNLRADVNVSVCRPGQYEKYQETQDFSHLGTRCEIKNMNSMRFIQQAIDYEARRQIAILEDGGKVVQETRLYDPDKGETRSMRSKEEAHDYRYFPDPDLLPLEIEQGWVDEIAASMPELPDAKKARFMADYGVTDYDANVLTAELDAAAYFEEVARGRDGKQAANWVINELFGRLNKQGLTIADTPVKAGQLGGVLDLIASGEISGKMAKDLFEILWTEGGDPAEVAAARGMKQVTDTGAIETAVDEIIAANPAQVEKAKANPKLAGWFVGQVIKATGGKANPAAVNQIVAQKLGL.

Belongs to the GatB/GatE family. GatB subfamily. As to quaternary structure, heterotrimer of A, B and C subunits.

It carries out the reaction L-glutamyl-tRNA(Gln) + L-glutamine + ATP + H2O = L-glutaminyl-tRNA(Gln) + L-glutamate + ADP + phosphate + H(+). The catalysed reaction is L-aspartyl-tRNA(Asn) + L-glutamine + ATP + H2O = L-asparaginyl-tRNA(Asn) + L-glutamate + ADP + phosphate + 2 H(+). In terms of biological role, allows the formation of correctly charged Asn-tRNA(Asn) or Gln-tRNA(Gln) through the transamidation of misacylated Asp-tRNA(Asn) or Glu-tRNA(Gln) in organisms which lack either or both of asparaginyl-tRNA or glutaminyl-tRNA synthetases. The reaction takes place in the presence of glutamine and ATP through an activated phospho-Asp-tRNA(Asn) or phospho-Glu-tRNA(Gln). The protein is Aspartyl/glutamyl-tRNA(Asn/Gln) amidotransferase subunit B of Cereibacter sphaeroides (strain ATCC 17023 / DSM 158 / JCM 6121 / CCUG 31486 / LMG 2827 / NBRC 12203 / NCIMB 8253 / ATH 2.4.1.) (Rhodobacter sphaeroides).